A 93-amino-acid chain; its full sequence is MDAKVVAVLALVLAALCLSDGKPVSLSYRCPCRFFESHVARANVKHLKILNTPNCALQIVARLKNNNRQVCIDPKLKWIQEYLEKALNKRFKM.

A signal peptide spans 1-21; that stretch reads MDAKVVAVLALVLAALCLSDG. A Receptor activation motif motif is present at residues 22–23; that stretch reads KP. Residues 29 to 33 form a receptor and heparin binding region; sequence RCPCR. 2 cysteine pairs are disulfide-bonded: C30-C55 and C32-C71. Receptor binding regions lie at residues 39 to 41, 48 to 50, and 60 to 70; these read VAR, KIL, and VARLKNNNRQV. Heparin contacts are provided by residues 41-51, R62, Q69, and K85; that span reads RANVKHLKILN.

The protein belongs to the intercrine alpha (chemokine CxC) family. In terms of assembly, monomer or homodimer; in equilibrium. Dimer formation is induced by non acidic pH and the presence of multivalent anions, and by binding to CXCR4 or heparin. Monomeric form is required for full chemotactic activity and resistance to ischemia/reperfusion injury, whereas the dimeric form acts as a partial agonist of CXCR4, stimulating Ca2+ mobilization but with no chemotactic activity and instead acts as a selective antagonist that blocks chemotaxis induced by the monomeric form. Interacts with the N-terminus of ACKR3. Interacts with integrin subunit ITGB3 (via the allosteric site (site 2)). Interacts with TNFAIP6 (via Link domain).

It localises to the secreted. In terms of biological role, chemoattractant active on T-lymphocytes and monocytes but not neutrophils. Activates the C-X-C chemokine receptor CXCR4 to induce a rapid and transient rise in the level of intracellular calcium ions and chemotaxis. Also binds to atypical chemokine receptor ACKR3, which activates the beta-arrestin pathway and acts as a scavenger receptor for SDF-1. Acts as a positive regulator of monocyte migration and a negative regulator of monocyte adhesion via the LYN kinase. Binds to the allosteric site (site 2) of integrins and activates integrins ITGAV:ITGB3, ITGA4:ITGB1 and ITGA5:ITGB1 in a CXCR4-independent manner. Stimulates migration of monocytes and T-lymphocytes through its receptors, CXCR4 and ACKR3, and decreases monocyte adherence to surfaces coated with ICAM-1, a ligand for beta-2 integrins. SDF1A/CXCR4 signaling axis inhibits beta-2 integrin LFA-1 mediated adhesion of monocytes to ICAM-1 through LYN kinase. Plays a protective role after myocardial infarction. Has several critical functions during embryonic development; required for B-cell lymphopoiesis, myelopoiesis in bone marrow and heart ventricular septum formation. Stimulates the proliferation of bone marrow-derived B-cell progenitors in the presence of IL7 as well as growth of stromal cell-dependent pre-B-cells. This chain is Stromal cell-derived factor 1 (CXCL12), found in Felis catus (Cat).